Here is an 89-residue protein sequence, read N- to C-terminus: Putative defensin-like protein 89 (89 aa).

The first 25 residues, 1 to 25, serve as a signal peptide directing secretion; it reads MGFKNNLSLVSVMVFALILLPMISG. 4 disulfide bridges follow: cysteine 30-cysteine 66, cysteine 36-cysteine 57, cysteine 42-cysteine 64, and cysteine 46-cysteine 65.

This sequence belongs to the DEFL family.

It localises to the secreted. The chain is Putative defensin-like protein 89 from Arabidopsis thaliana (Mouse-ear cress).